A 382-amino-acid chain; its full sequence is Albumin (382 aa).

2 Albumin domains span residues 1 to 178 (KCRI…ILLE) and 179 to 377 (AALK…GLLQ). Cystine bridges form between Cys-2–Cys-48, Cys-47–Cys-55, Cys-67–Cys-81, Cys-80–Cys-91, Cys-116–Cys-161, Cys-160–Cys-169, Cys-192–Cys-238, Cys-237–Cys-248, Cys-261–Cys-277, Cys-276–Cys-287, Cys-314–Cys-359, and Cys-358–Cys-367. Ca(2+) is bound by residues Asp-51 and Glu-54. Asp-51 contacts Zn(2+).

This sequence belongs to the ALB/AFP/VDB family. Plasma.

It localises to the secreted. Its function is as follows. Serum albumin, the main protein of plasma, has a good binding capacity for water, Ca(2+), Na(+), K(+), fatty acids, hormones, bilirubin and drugs. Its main function is the regulation of the colloidal osmotic pressure of blood. The sequence is that of Albumin (ALB) from Aquarana catesbeiana (American bullfrog).